An 810-amino-acid chain; its full sequence is Phenylalanine--tRNA ligase beta subunit (810 aa).

The 114-residue stretch at 40–153 (KLPDQKVIVG…EACEIGQPLA (114 aa)) folds into the tRNA-binding domain. The B5 domain maps to 399–480 (AAQKIVSLRP…RLYGYNNLEP (82 aa)). 4 residues coordinate Mg(2+): Asp-458, Asp-464, Glu-467, and Glu-468. Residues 714-808 (SKFPVVERDL…ARSELGAVIR (95 aa)) enclose the FDX-ACB domain.

This sequence belongs to the phenylalanyl-tRNA synthetase beta subunit family. Type 1 subfamily. Tetramer of two alpha and two beta subunits. Mg(2+) is required as a cofactor.

It is found in the cytoplasm. It carries out the reaction tRNA(Phe) + L-phenylalanine + ATP = L-phenylalanyl-tRNA(Phe) + AMP + diphosphate + H(+). This chain is Phenylalanine--tRNA ligase beta subunit, found in Chlorobaculum tepidum (strain ATCC 49652 / DSM 12025 / NBRC 103806 / TLS) (Chlorobium tepidum).